Here is a 263-residue protein sequence, read N- to C-terminus: Ribonuclease HII (263 aa).

In terms of domain architecture, RNase H type-2 spans 71 to 262 (KAIAGIDEVG…VKSMCCDSTN (192 aa)). Residues aspartate 77, glutamate 78, and aspartate 172 each contribute to the a divalent metal cation site.

This sequence belongs to the RNase HII family. It depends on Mn(2+) as a cofactor. The cofactor is Mg(2+).

The protein localises to the cytoplasm. It catalyses the reaction Endonucleolytic cleavage to 5'-phosphomonoester.. Endonuclease that specifically degrades the RNA of RNA-DNA hybrids. This Streptococcus pyogenes serotype M1 protein is Ribonuclease HII.